We begin with the raw amino-acid sequence, 206 residues long: Potassium channel B446_29190 (206 aa).

Position 1 (Met1) is a topological domain, cytoplasmic. A helical membrane pass occupies residues 2–25 (NESGRVEAFSDGVFAIAITLLILD). The RxxxFSD motif signature appears at 6–12 (RVEAFSD). At 26-44 (IKVPKADGPGGLWHALGAQ) the chain is on the extracellular side. The tract at residues 31–34 (ADGP) is short helix H1. Positions 36–42 (GLWHALG) are short helix H2. Residues 45-70 (WPSYAAYVVSFLVIGIMWVNHHQVFS) form a helical membrane-spanning segment. Topologically, residues 71 to 76 (YVARVD) are cytoplasmic. Residues 77–102 (RALMFLNLLVLMVVAAVPWPTAMLAE) traverse the membrane as a helical segment. The Extracellular portion of the chain corresponds to 103 to 110 (YLREDRAS). The chain crosses the membrane as a helical span at residues 111 to 135 (HVAAAVYSLVMVAMALAFQALWWHL). Over 136-147 (TRTGHLFDPRVD) the chain is Cytoplasmic. A helical membrane pass occupies residues 148–174 (APAARATRIRFALGSLGYPLTVGLAFV). Topologically, residues 175 to 176 (SA) are extracellular. Residues 177-192 (PLTLAAHGLLALYYGF) form a helical membrane-spanning segment. At 193 to 206 (NQVPVPTREAAAPS) the chain is on the cytoplasmic side.

This sequence belongs to the TMEM175 family. As to quaternary structure, homotetramer.

The protein resides in the membrane. It catalyses the reaction K(+)(in) = K(+)(out). In terms of biological role, potassium channel. The polypeptide is Potassium channel B446_29190 (Streptomyces collinus (strain DSM 40733 / Tue 365)).